A 430-amino-acid polypeptide reads, in one-letter code: Cholecystokinin receptor type A (430 aa).

Topologically, residues M1 to P41 are extracellular. N-linked (GlcNAc...) asparagine glycans are attached at residues N10, N13, and N24. A disulfide bond links C18 and C29. Residues A42–I67 traverse the membrane as a helical segment. At R68–N77 the chain is on the cytoplasmic side. A helical transmembrane segment spans residues I78–L104. Residues K105–K115 lie on the Extracellular side of the membrane. C114 and C196 are disulfide-bonded. The helical transmembrane segment at T116 to L137 threads the bilayer. The Cytoplasmic portion of the chain corresponds to E138–H157. A helical membrane pass occupies residues A158–I178. Residues Y179–H210 lie on the Extracellular side of the membrane. Residue N190 is glycosylated (N-linked (GlcNAc...) asparagine). Residues T211–L234 traverse the membrane as a helical segment. The Cytoplasmic segment spans residues E235–R315. The chain crosses the membrane as a helical span at residues M316–A336. Over W337–G351 the chain is Extracellular. Residues T352–M375 traverse the membrane as a helical segment. The Cytoplasmic portion of the chain corresponds to N376–P430. Residue C389 is the site of S-palmitoyl cysteine attachment. The interval P396–P430 is disordered. The segment covering A413–P430 has biased composition (polar residues).

It belongs to the G-protein coupled receptor 1 family.

It is found in the cell membrane. In terms of biological role, receptor for cholecystokinin. Mediates pancreatic growth and enzyme secretion, smooth muscle contraction of the gall bladder and stomach. Has a 1000-fold higher affinity for CCK rather than for gastrin. It modulates feeding and dopamine-induced behavior in the central and peripheral nervous system. This receptor mediates its action by association with G proteins that activate a phosphatidylinositol-calcium second messenger system. In Cavia porcellus (Guinea pig), this protein is Cholecystokinin receptor type A (CCKAR).